The following is a 407-amino-acid chain: Peptidase T (407 aa).

His82 contributes to the Zn(2+) binding site. Asp84 is an active-site residue. Asp143 lines the Zn(2+) pocket. Glu177 acts as the Proton acceptor in catalysis. The Zn(2+) site is built by Glu178, Asp200, and His382.

This sequence belongs to the peptidase M20B family. Zn(2+) is required as a cofactor.

The protein resides in the cytoplasm. It catalyses the reaction Release of the N-terminal residue from a tripeptide.. Its function is as follows. Cleaves the N-terminal amino acid of tripeptides. This chain is Peptidase T, found in Streptococcus thermophilus (strain ATCC BAA-491 / LMD-9).